Consider the following 654-residue polypeptide: Threonine--tRNA ligase (654 aa).

One can recognise a TGS domain in the interval 1-63; that stretch reads MAQISLTFPD…DADASIAIHT (63 aa). Residues 247 to 544 are catalytic; it reads DHRKLGREMN…LIENFAGKLP (298 aa). Positions 344, 395, and 521 each coordinate Zn(2+).

This sequence belongs to the class-II aminoacyl-tRNA synthetase family. As to quaternary structure, homodimer. Zn(2+) serves as cofactor.

Its subcellular location is the cytoplasm. The enzyme catalyses tRNA(Thr) + L-threonine + ATP = L-threonyl-tRNA(Thr) + AMP + diphosphate + H(+). Its function is as follows. Catalyzes the attachment of threonine to tRNA(Thr) in a two-step reaction: L-threonine is first activated by ATP to form Thr-AMP and then transferred to the acceptor end of tRNA(Thr). Also edits incorrectly charged L-seryl-tRNA(Thr). The chain is Threonine--tRNA ligase from Dinoroseobacter shibae (strain DSM 16493 / NCIMB 14021 / DFL 12).